The chain runs to 86 residues: MRGRMKTLSEIKEILRKHKKELKENYKVKSIAIFGSYARGEQKETSDIDIMVEFYETPDYLKFFELEDYLENILNIKVDLITKNSI.

The GSX(10)DXD motif signature appears at 35–49 (GSYARGEQKETSDID). Residues D47, D49, and D79 each contribute to the Mg(2+) site.

This sequence belongs to the MntA antitoxin family. Probably forms a complex with cognate toxin MJ1216. Mg(2+) is required as a cofactor.

The enzyme catalyses L-tyrosyl-[protein] + ATP = O-(5'-adenylyl)-L-tyrosyl-[protein] + diphosphate. It catalyses the reaction O-(5'-adenylyl)-L-tyrosyl-[protein] + ATP = O-[5'-(adenylyl-(5'-&gt;3')-adenylyl)]-L-tyrosyl-[protein] + diphosphate. Its function is as follows. Probable antitoxin component of a putative type VII toxin-antitoxin (TA) system. Neutralizes cognate toxic MJ1216 by di-AMPylation. This chain is Putative protein adenylyltransferase MJ1215, found in Methanocaldococcus jannaschii (strain ATCC 43067 / DSM 2661 / JAL-1 / JCM 10045 / NBRC 100440) (Methanococcus jannaschii).